Consider the following 358-residue polypeptide: Glutamine synthetase (358 aa).

In terms of domain architecture, GS beta-grasp spans 26–105; that stretch reads ILAEYIWIDG…VLAECWNADG (80 aa). The GS catalytic domain occupies 112–358; the sequence is HRHECAKIME…IMMETICGGI (247 aa).

Belongs to the glutamine synthetase family. Homooctamer.

The protein localises to the cytoplasm. It carries out the reaction L-glutamate + NH4(+) + ATP = L-glutamine + ADP + phosphate + H(+). This is Glutamine synthetase (GLN1) from Tuber borchii (White truffle).